Consider the following 445-residue polypeptide: Exodeoxyribonuclease 7 large subunit (445 aa).

This sequence belongs to the XseA family. As to quaternary structure, heterooligomer composed of large and small subunits.

The protein resides in the cytoplasm. The catalysed reaction is Exonucleolytic cleavage in either 5'- to 3'- or 3'- to 5'-direction to yield nucleoside 5'-phosphates.. In terms of biological role, bidirectionally degrades single-stranded DNA into large acid-insoluble oligonucleotides, which are then degraded further into small acid-soluble oligonucleotides. This is Exodeoxyribonuclease 7 large subunit from Xanthomonas oryzae pv. oryzae (strain MAFF 311018).